Consider the following 380-residue polypeptide: GDSL esterase/lipase At3g26430 (380 aa).

Residues 1 to 25 (METNLLLVKCVLLASCLIHPRACSP) form the signal peptide. Catalysis depends on S38, which acts as the Nucleophile. N-linked (GlcNAc...) asparagine glycosylation is found at N97, N115, and N183. Catalysis depends on residues D346 and H349.

The protein belongs to the 'GDSL' lipolytic enzyme family.

It is found in the secreted. It carries out the reaction hexadecanoate ester + H2O = an aliphatic alcohol + hexadecanoate + H(+). The enzyme catalyses a butanoate ester + H2O = an aliphatic alcohol + butanoate + H(+). With respect to regulation, lipase activity is inhibited by phenylmethylsulfonyl fluoride (PMSF), but not neostigmine bromide (NB). Its function is as follows. Lipase that can hydrolyze p-nitrophenyl butyrate and p-nitrophenyl palmitate in vitro. Possesses low activity against p-nitrophenyl acetate. Substrate preference is p-nitrophenyl palmitate &gt; p-nitrophenyl butyrate &gt;&gt; p-nitrophenyl acetate. Lacks cholinesterase activity. This chain is GDSL esterase/lipase At3g26430, found in Arabidopsis thaliana (Mouse-ear cress).